The following is an 855-amino-acid chain: Receptor-like protein kinase THESEUS 1 (855 aa).

Positions 1 to 22 (MVFTKSLLVLLWFLSCYTTTTS) are cleaved as a signal peptide. At 23–415 (SALFNPPDNY…GGSGSKSKKK (393 aa)) the chain is on the extracellular side. Asparagine 41, asparagine 64, asparagine 75, asparagine 114, asparagine 118, asparagine 136, asparagine 143, asparagine 154, asparagine 168, asparagine 225, asparagine 242, asparagine 288, asparagine 353, and asparagine 376 each carry an N-linked (GlcNAc...) asparagine glycan. The helical transmembrane segment at 416–436 (AVIIGSLVGAVTLILLIAVCC) threads the bilayer. Residues 437–855 (YCCLVASRKQ…FSQLVHPRGR (419 aa)) are Cytoplasmic-facing. The Protein kinase domain occupies 510–783 (FDESSLLGVG…GDVLWNLEYA (274 aa)). Residues 516 to 524 (LGVGGFGRV) and lysine 538 contribute to the ATP site. Aspartate 634 acts as the Proton acceptor in catalysis. The interval 822–855 (IDRGGVNSGTGTDDDAEDATTSAVFSQLVHPRGR) is disordered.

The protein belongs to the protein kinase superfamily. Ser/Thr protein kinase family. Autophosphorylated. As to expression, expressed in most vegetative tissues, including leaves, stems and roots, primarily in expanding cells and vascular tissue.

The protein resides in the cell membrane. Its function is as follows. Receptor-like protein kinase required for cell elongation during vegetative growth, mostly in a brassinosteroid-(BR-) independent manner. Mediates the response of growing plant cells to the perturbation of cellulose synthesis and may act as a cell-wall-integrity sensor. Controls ectopic-lignin accumulation in cellulose-deficient mutant backgrounds. In Arabidopsis thaliana (Mouse-ear cress), this protein is Receptor-like protein kinase THESEUS 1 (THE1).